We begin with the raw amino-acid sequence, 120 residues long: Mating factor alpha-2 (120 aa).

The N-terminal stretch at 1 to 21 (MKFISTFLTFILAAVSVTASS) is a signal peptide. 2 propeptides span residues 22–86 (DEDI…VADA) and 102–107 (EANADA).

In terms of biological role, the active factor is excreted into the culture medium by haploid cells of the alpha mating type and acts on cells of the opposite mating type (type A). It mediates the conjugation process between the two types by inhibiting the initiation of DNA synthesis in type a cells and synchronizing them with type alpha. The polypeptide is Mating factor alpha-2 (MF(ALPHA)2) (Saccharomyces cerevisiae (strain ATCC 204508 / S288c) (Baker's yeast)).